A 127-amino-acid polypeptide reads, in one-letter code: Small ribosomal subunit protein uS11 (127 aa).

It belongs to the universal ribosomal protein uS11 family. In terms of assembly, part of the 30S ribosomal subunit. Interacts with proteins S7 and S18. Binds to IF-3.

In terms of biological role, located on the platform of the 30S subunit, it bridges several disparate RNA helices of the 16S rRNA. Forms part of the Shine-Dalgarno cleft in the 70S ribosome. The polypeptide is Small ribosomal subunit protein uS11 (Streptococcus suis (strain 98HAH33)).